The sequence spans 103 residues: Small ribosomal subunit protein uS10 (103 aa).

This sequence belongs to the universal ribosomal protein uS10 family. In terms of assembly, part of the 30S ribosomal subunit.

Its function is as follows. Involved in the binding of tRNA to the ribosomes. The sequence is that of Small ribosomal subunit protein uS10 from Rubrobacter xylanophilus (strain DSM 9941 / JCM 11954 / NBRC 16129 / PRD-1).